The chain runs to 510 residues: ATP synthase subunit alpha (510 aa).

Residue 169 to 176 participates in ATP binding; sequence GDRQTGKT.

The protein belongs to the ATPase alpha/beta chains family. As to quaternary structure, F-type ATPases have 2 components, CF(1) - the catalytic core - and CF(0) - the membrane proton channel. CF(1) has five subunits: alpha(3), beta(3), gamma(1), delta(1), epsilon(1). CF(0) has four main subunits: a(1), b(1), b'(1) and c(9-12).

The protein resides in the cell inner membrane. It carries out the reaction ATP + H2O + 4 H(+)(in) = ADP + phosphate + 5 H(+)(out). In terms of biological role, produces ATP from ADP in the presence of a proton gradient across the membrane. The alpha chain is a regulatory subunit. The protein is ATP synthase subunit alpha of Rhodopseudomonas palustris (strain HaA2).